We begin with the raw amino-acid sequence, 238 residues long: Pyridoxine 5'-phosphate synthase (238 aa).

Residues asparagine 7 and arginine 18 each coordinate 3-amino-2-oxopropyl phosphate. Histidine 43 serves as the catalytic Proton acceptor. Residues arginine 45 and histidine 50 each coordinate 1-deoxy-D-xylulose 5-phosphate. Glutamate 70 acts as the Proton acceptor in catalysis. Residue threonine 100 participates in 1-deoxy-D-xylulose 5-phosphate binding. Histidine 190 (proton donor) is an active-site residue. 3-amino-2-oxopropyl phosphate-binding positions include aspartate 191 and 213-214 (GH).

Belongs to the PNP synthase family. Homooctamer; tetramer of dimers.

It is found in the cytoplasm. It carries out the reaction 3-amino-2-oxopropyl phosphate + 1-deoxy-D-xylulose 5-phosphate = pyridoxine 5'-phosphate + phosphate + 2 H2O + H(+). It participates in cofactor biosynthesis; pyridoxine 5'-phosphate biosynthesis; pyridoxine 5'-phosphate from D-erythrose 4-phosphate: step 5/5. Catalyzes the complicated ring closure reaction between the two acyclic compounds 1-deoxy-D-xylulose-5-phosphate (DXP) and 3-amino-2-oxopropyl phosphate (1-amino-acetone-3-phosphate or AAP) to form pyridoxine 5'-phosphate (PNP) and inorganic phosphate. In Phocaeicola vulgatus (strain ATCC 8482 / DSM 1447 / JCM 5826 / CCUG 4940 / NBRC 14291 / NCTC 11154) (Bacteroides vulgatus), this protein is Pyridoxine 5'-phosphate synthase.